The chain runs to 516 residues: Facilitated glucose transporter homolog (516 aa).

Residues 1–37 are disordered; it reads MNAVVASQNKNDRSFSNMESESSSNVEKSEKENHHQS. Residues 1–47 lie on the Cytoplasmic side of the membrane; that stretch reads MNAVVASQNKNDRSFSNMESESSSNVEKSEKENHHQSLPDENWTPFL. A compositionally biased stretch (low complexity) spans 14 to 26; that stretch reads SFSNMESESSSNV. A compositionally biased stretch (basic and acidic residues) spans 27–37; it reads EKSEKENHHQS. The chain crosses the membrane as a helical span at residues 48-68; sequence FFCISSIALASFQDGFQIGCI. Residues 69-101 lie on the Extracellular side of the membrane; it reads NAPGPLIIDWIKKCHFELFGEVLSQYQADFIWS. Residues 102 to 122 traverse the membrane as a helical segment; the sequence is VAVSMFSVGGMFGSFCSGFLA. Topologically, residues 123–138 are cytoplasmic; it reads DKFGRKSTLLYNNILA. The helical transmembrane segment at 139–159 threads the bilayer; it reads LLAAVCLSTSKLFNFYPMIVF. At 160 to 161 the chain is on the extracellular side; the sequence is GR. Residues 162-182 traverse the membrane as a helical segment; it reads FLVGLNCGITSGLVPMFLTEL. The Cytoplasmic portion of the chain corresponds to 183–200; that stretch reads APANLRGKCGSFHQLNIS. A helical transmembrane segment spans residues 201 to 221; sequence VAIVLSQALGLPQIFGTQVGW. Residue proline 222 is a topological domain, extracellular. A helical transmembrane segment spans residues 223–243; the sequence is YIFACVAIPTFLQLATIPFCV. At 244-306 the chain is on the cytoplasmic side; sequence ESPKYLISKL…SLFKGDNQWP (63 aa). A helical membrane pass occupies residues 307 to 327; sequence MIVSILMMFSQQFSGISAVTF. Topologically, residues 328-344 are extracellular; that stretch reads YSTLIFKRNGLSGNEPM. The chain crosses the membrane as a helical span at residues 345–365; it reads YATVGFGCIKLIATFGCLFLI. Topologically, residues 366-376 are cytoplasmic; sequence DHPKFGRKRLH. The helical transmembrane segment at 377-397 threads the bilayer; sequence IAGLSGMCISSILIVITLTLS. The Extracellular portion of the chain corresponds to 398–409; the sequence is NAGYHWASYMNV. The helical transmembrane segment at 410–430 threads the bilayer; it reads LFILSFVVTFAFGPGPIPWFF. Topologically, residues 431-444 are cytoplasmic; the sequence is TSELFDSATRGRAA. A helical transmembrane segment spans residues 445–465; that stretch reads AVSATSNWVANWMVGLTFLPI. Over 466-471 the chain is Extracellular; the sequence is NNIIHQ. Residues 472-492 traverse the membrane as a helical segment; it reads YAFLMFTFFTFTFAIFTWKFV. Residues 493 to 516 lie on the Cytoplasmic side of the membrane; that stretch reads PETKGKSPSAIRKELAFMRKRICS.

Belongs to the major facilitator superfamily. Sugar transporter (TC 2.A.1.1) family. As to expression, expressed in seam cells from the early embryonic stage through the L2 stage (at protein level).

It localises to the cell membrane. Functionally, appears to have no transport activity for glucose. The chain is Facilitated glucose transporter homolog from Caenorhabditis elegans.